The primary structure comprises 101 residues: Protein Tat (101 aa).

A compositionally biased stretch (basic and acidic residues) spans 1-12 (MEPVDPRLEPWK). A disordered region spans residues 1–24 (MEPVDPRLEPWKHPGSQPKTASNN). An interaction with human CREBBP region spans residues 1 to 24 (MEPVDPRLEPWKHPGSQPKTASNN). Residues 1-48 (MEPVDPRLEPWKHPGSQPKTASNNCYCKRCCLHCQVCFTKKGLGISYG) form a transactivation region. Positions 22–37 (SNNCYCKRCCLHCQVC) are cysteine-rich. Zn(2+) is bound by residues Cys25 and Cys27. An N6-acetyllysine; by host PCAF modification is found at Lys28. Positions 30, 33, 34, and 37 each coordinate Zn(2+). Residues 38-48 (FTKKGLGISYG) are core. Residues 45-101 (ISYGRKKRRQRRRAPQDSKTHQVSLSKQPASQPRGDPTGPKESKKKVERETETDPED) are disordered. The span at 48-57 (GRKKRRQRRR) shows a compositional bias: basic residues. Residues 49 to 57 (RKKRRQRRR) carry the Nuclear localization signal, RNA-binding (TAR), and protein transduction motif. Residues 49 to 86 (RKKRRQRRRAPQDSKTHQVSLSKQPASQPRGDPTGPKE) are interaction with the host capping enzyme RNGTT. Lys50 and Lys51 each carry N6-acetyllysine; by host EP300 and GCN5L2. An asymmetric dimethylarginine; by host PRMT6 mark is found at Arg52 and Arg53. Over residues 65–75 (HQVSLSKQPAS) the composition is skewed to polar residues. Lys71 is covalently cross-linked (Glycyl lysine isopeptide (Lys-Gly) (interchain with G-Cter in ubiquitin)). Positions 78-80 (RGD) match the Cell attachment site motif. Over residues 83-101 (GPKESKKKVERETETDPED) the composition is skewed to basic and acidic residues.

Belongs to the lentiviruses Tat family. As to quaternary structure, interacts with host CCNT1. Associates with the P-TEFb complex composed at least of Tat, P-TEFb (CDK9 and CCNT1), TAR RNA, RNA Pol II. Recruits the HATs CREBBP, TAF1/TFIID, EP300, PCAF and GCN5L2. Interacts with host KAT5/Tip60; this interaction targets the latter to degradation. Interacts with the host deacetylase SIRT1. Interacts with host capping enzyme RNGTT; this interaction stimulates RNGTT. Binds to host KDR, and to the host integrins ITGAV/ITGB3 and ITGA5/ITGB1. Interacts with host KPNB1/importin beta-1 without previous binding to KPNA1/importin alpha-1. Interacts with EIF2AK2. Interacts with host nucleosome assembly protein NAP1L1; this interaction may be required for the transport of Tat within the nucleus, since the two proteins interact at the nuclear rim. Interacts with host C1QBP/SF2P32; this interaction involves lysine-acetylated Tat. Interacts with the host chemokine receptors CCR2, CCR3 and CXCR4. Interacts with host DPP4/CD26; this interaction may trigger an anti-proliferative effect. Interacts with host LDLR. Interacts with the host extracellular matrix metalloproteinase MMP1. Interacts with host PRMT6; this interaction mediates Tat's methylation. Interacts with, and is ubiquitinated by MDM2/Hdm2. Interacts with host PSMC3 and HTATIP2. Interacts with STAB1; this interaction may overcome SATB1-mediated repression of IL2 and IL2RA (interleukin) in T cells by binding to the same domain than HDAC1. Interacts (when acetylated) with human CDK13, thereby increasing HIV-1 mRNA splicing and promoting the production of the doubly spliced HIV-1 protein Nef. Interacts with host TBP; this interaction modulates the activity of transcriptional pre-initiation complex. Interacts with host RELA. Interacts with host PLSCR1; this interaction negatively regulates Tat transactivation activity by altering its subcellular distribution. In terms of processing, asymmetrical arginine methylation by host PRMT6 seems to diminish the transactivation capacity of Tat and affects the interaction with host CCNT1. Acetylation by EP300, CREBBP, GCN5L2/GCN5 and PCAF regulates the transactivation activity of Tat. EP300-mediated acetylation of Lys-50 promotes dissociation of Tat from the TAR RNA through the competitive binding to PCAF's bromodomain. In addition, the non-acetylated Tat's N-terminus can also interact with PCAF. PCAF-mediated acetylation of Lys-28 enhances Tat's binding to CCNT1. Lys-50 is deacetylated by SIRT1. Post-translationally, polyubiquitination by host MDM2 does not target Tat to degradation, but activates its transactivation function and fosters interaction with CCNT1 and TAR RNA. In terms of processing, phosphorylated by EIF2AK2 on serine and threonine residues adjacent to the basic region important for TAR RNA binding and function. Phosphorylation of Tat by EIF2AK2 is dependent on the prior activation of EIF2AK2 by dsRNA.

It is found in the host nucleus. The protein localises to the host nucleolus. The protein resides in the host cytoplasm. Its subcellular location is the secreted. Its function is as follows. Transcriptional activator that increases RNA Pol II processivity, thereby increasing the level of full-length viral transcripts. Recognizes a hairpin structure at the 5'-LTR of the nascent viral mRNAs referred to as the transactivation responsive RNA element (TAR) and recruits the cyclin T1-CDK9 complex (P-TEFb complex) that will in turn hyperphosphorylate the RNA polymerase II to allow efficient elongation. The CDK9 component of P-TEFb and other Tat-activated kinases hyperphosphorylate the C-terminus of RNA Pol II that becomes stabilized and much more processive. Other factors such as HTATSF1/Tat-SF1, SUPT5H/SPT5, and HTATIP2 are also important for Tat's function. Besides its effect on RNA Pol II processivity, Tat induces chromatin remodeling of proviral genes by recruiting the histone acetyltransferases (HATs) CREBBP, EP300 and PCAF to the chromatin. This also contributes to the increase in proviral transcription rate, especially when the provirus integrates in transcriptionally silent region of the host genome. To ensure maximal activation of the LTR, Tat mediates nuclear translocation of NF-kappa-B by interacting with host RELA. Through its interaction with host TBP, Tat may also modulate transcription initiation. Tat can reactivate a latently infected cell by penetrating in it and transactivating its LTR promoter. In the cytoplasm, Tat is thought to act as a translational activator of HIV-1 mRNAs. Functionally, extracellular circulating Tat can be endocytosed by surrounding uninfected cells via the binding to several surface receptors such as CD26, CXCR4, heparan sulfate proteoglycans (HSPG) or LDLR. Neurons are rarely infected, but they internalize Tat via their LDLR. Through its interaction with nuclear HATs, Tat is potentially able to control the acetylation-dependent cellular gene expression. Modulates the expression of many cellular genes involved in cell survival, proliferation or in coding for cytokines or cytokine receptors. Tat plays a role in T-cell and neurons apoptosis. Tat induced neurotoxicity and apoptosis probably contribute to neuroAIDS. Circulating Tat also acts as a chemokine-like and/or growth factor-like molecule that binds to specific receptors on the surface of the cells, affecting many cellular pathways. In the vascular system, Tat binds to ITGAV/ITGB3 and ITGA5/ITGB1 integrins dimers at the surface of endothelial cells and competes with bFGF for heparin-binding sites, leading to an excess of soluble bFGF. This Homo sapiens (Human) protein is Protein Tat.